A 34-amino-acid polypeptide reads, in one-letter code: Corticostatin-2 (34 aa).

Cystine bridges form between Cys-3/Cys-32, Cys-5/Cys-21, and Cys-11/Cys-31.

The protein belongs to the alpha-defensin family.

It localises to the secreted. Its function is as follows. Microbicidal activity and inhibits corticotropin (ACTH) stimulated corticosterone production. This is Corticostatin-2 from Oryctolagus cuniculus (Rabbit).